Here is a 230-residue protein sequence, read N- to C-terminus: Enolase-phosphatase E1 (230 aa).

Belongs to the HAD-like hydrolase superfamily. MasA/MtnC family. As to quaternary structure, monomer. Requires Mg(2+) as cofactor.

The enzyme catalyses 5-methylsulfanyl-2,3-dioxopentyl phosphate + H2O = 1,2-dihydroxy-5-(methylsulfanyl)pent-1-en-3-one + phosphate. The protein operates within amino-acid biosynthesis; L-methionine biosynthesis via salvage pathway; L-methionine from S-methyl-5-thio-alpha-D-ribose 1-phosphate: step 3/6. It participates in amino-acid biosynthesis; L-methionine biosynthesis via salvage pathway; L-methionine from S-methyl-5-thio-alpha-D-ribose 1-phosphate: step 4/6. In terms of biological role, bifunctional enzyme that catalyzes the enolization of 2,3-diketo-5-methylthiopentyl-1-phosphate (DK-MTP-1-P) into the intermediate 2-hydroxy-3-keto-5-methylthiopentenyl-1-phosphate (HK-MTPenyl-1-P), which is then dephosphorylated to form the acireductone 1,2-dihydroxy-3-keto-5-methylthiopentene (DHK-MTPene). This is Enolase-phosphatase E1 from Sulfurihydrogenibium sp. (strain YO3AOP1).